We begin with the raw amino-acid sequence, 244 residues long: 5-oxoprolinase subunit A (244 aa).

It belongs to the LamB/PxpA family. In terms of assembly, forms a complex composed of PxpA, PxpB and PxpC.

The enzyme catalyses 5-oxo-L-proline + ATP + 2 H2O = L-glutamate + ADP + phosphate + H(+). Functionally, catalyzes the cleavage of 5-oxoproline to form L-glutamate coupled to the hydrolysis of ATP to ADP and inorganic phosphate. This chain is 5-oxoprolinase subunit A, found in Escherichia coli (strain SE11).